The chain runs to 311 residues: 26S proteasome regulatory subunit RPN11 (311 aa).

An MPN domain is found at 32–167 (VYISSLALLK…IDAFRLISPA (136 aa)). Residues H114, H116, and D127 each coordinate Zn(2+). Positions 114-127 (HSHPGFGCWLSSVD) match the JAMM motif motif.

The protein belongs to the peptidase M67A family.

Functionally, acts as a regulatory subunit of the 26 proteasome which is involved in the ATP-dependent degradation of ubiquitinated proteins. The protein is 26S proteasome regulatory subunit RPN11 (RPN11) of Eremothecium gossypii (strain ATCC 10895 / CBS 109.51 / FGSC 9923 / NRRL Y-1056) (Yeast).